Here is a 253-residue protein sequence, read N- to C-terminus: 1-(5-phosphoribosyl)-5-[(5-phosphoribosylamino)methylideneamino] imidazole-4-carboxamide isomerase (253 aa).

The active-site Proton acceptor is Asp-8. Asp-129 acts as the Proton donor in catalysis.

The protein belongs to the HisA/HisF family.

It is found in the cytoplasm. It catalyses the reaction 1-(5-phospho-beta-D-ribosyl)-5-[(5-phospho-beta-D-ribosylamino)methylideneamino]imidazole-4-carboxamide = 5-[(5-phospho-1-deoxy-D-ribulos-1-ylimino)methylamino]-1-(5-phospho-beta-D-ribosyl)imidazole-4-carboxamide. It participates in amino-acid biosynthesis; L-histidine biosynthesis; L-histidine from 5-phospho-alpha-D-ribose 1-diphosphate: step 4/9. The polypeptide is 1-(5-phosphoribosyl)-5-[(5-phosphoribosylamino)methylideneamino] imidazole-4-carboxamide isomerase (Microcystis aeruginosa (strain NIES-843 / IAM M-2473)).